The following is a 150-amino-acid chain: Large ribosomal subunit protein uL15 (150 aa).

Positions 1–55 (MADNEILQMHDLKPAPGAKKDRTRVGRGEGSKGKTSGRGAKGQTKRNHVRPGFEG) are disordered. Positions 8 to 32 (QMHDLKPAPGAKKDRTRVGRGEGSK) are enriched in basic and acidic residues.

It belongs to the universal ribosomal protein uL15 family. Part of the 50S ribosomal subunit.

Binds to the 23S rRNA. The protein is Large ribosomal subunit protein uL15 of Bifidobacterium longum (strain NCC 2705).